Consider the following 151-residue polypeptide: Large ribosomal subunit protein bL9 (151 aa).

This sequence belongs to the bacterial ribosomal protein bL9 family.

In terms of biological role, binds to the 23S rRNA. This Chloroherpeton thalassium (strain ATCC 35110 / GB-78) protein is Large ribosomal subunit protein bL9.